Consider the following 549-residue polypeptide: Cation/acetate symporter ActP (549 aa).

The next 13 membrane-spanning stretches (helical) occupy residues 33-53, 77-97, 103-123, 148-168, 183-203, 206-226, 262-282, 303-323, 355-375, 404-424, 428-448, 464-484, and 493-513; these read WQAIVMFLIFVVFTLGITYWA, LAIAGDYMSAASFLGISALVF, GLIYSLGFLVGWPIILFLIAE, ILSACGSLVVVALYLIAQMVG, IAVVLVGVLMMMYVLFGGMLA, WVQIIKAVLLLFGASFMAFMV, ISALSLGLGLMFGTAGLPHIL, GFMGYFYILTFIIGFGAIMLV, LFLGFISAVAFATILAVVAGL, VSKITVLVLGVIAIILGVLFE, IAFMVGLAFAIAASCNFPIIL, GGWLGLVTAVVLMVLGPTIWV, and IFPYEYPALFSISVAFIGIWF.

This sequence belongs to the sodium:solute symporter (SSF) (TC 2.A.21) family.

Its subcellular location is the cell inner membrane. Its function is as follows. Transports acetate. The sequence is that of Cation/acetate symporter ActP from Citrobacter koseri (strain ATCC BAA-895 / CDC 4225-83 / SGSC4696).